The following is a 191-amino-acid chain: Guanylate kinase (191 aa).

A Guanylate kinase-like domain is found at 6-184; that stretch reads GLIIILSSPS…TIQQIHTIIL (179 aa). Residue 13–20 participates in ATP binding; sequence SPSGAGKS.

Belongs to the guanylate kinase family.

It localises to the cytoplasm. The catalysed reaction is GMP + ATP = GDP + ADP. In terms of biological role, essential for recycling GMP and indirectly, cGMP. In Rickettsia bellii (strain RML369-C), this protein is Guanylate kinase.